A 313-amino-acid chain; its full sequence is Leucine-rich repeat-containing protein 52 (313 aa).

Residues 1–23 form the signal peptide; that stretch reads MSLASGPGPGWLLFSFGMGLVSG. The 30-residue stretch at 24-53 folds into the LRRNT domain; the sequence is SKCPNNCLCQAQEVICTGKQLTEYPLDIPL. Residues 24 to 244 lie on the Extracellular side of the membrane; that stretch reads SKCPNNCLCQ…MCITHLDHKD (221 aa). Disulfide bonds link Cys-26–Cys-32 and Cys-30–Cys-39. LRR repeat units follow at residues 54–75, 78–99, 102–123, 126–148, and 151–172; these read NTRR…HLGL, DLVY…TFIG, KLIY…TFSV, NLVQ…TFAN, and SLRY…ALYH. Asn-112 and Asn-148 each carry an N-linked (GlcNAc...) asparagine glycan. The LRRCT domain occupies 184-238; the sequence is NPWKCNCSFLDFAIFLIVFHMDPSDDLNATCVEPTELTGWPITRVGNPLRYMCIT. Disulfide bonds link Cys-188–Cys-214 and Cys-190–Cys-236. Residues Asn-189 and Asn-211 are each glycosylated (N-linked (GlcNAc...) asparagine). The chain crosses the membrane as a helical span at residues 245–265; it reads YIFLLLIGFCIFAAGTVAAWL. The Cytoplasmic segment spans residues 266–313; the sequence is TGVCAVLYQNTRHKSSEEDEDEAGTRVEVSRRIFQTQTSSVQEFPQLI.

May interact with KCNU1; this interaction may be required for LRRC52 stability and may change the channel gating properties. Interacts with KCNMA1. N-glycosylated. As to expression, mainly expressed in testis and skeletal muscle.

Its subcellular location is the cell membrane. Functionally, auxiliary protein of the large-conductance, voltage and calcium-activated potassium channel (BK alpha). Modulates gating properties by producing a marked shift in the BK channel's voltage dependence of activation in the hyperpolarizing direction, and in the absence of calcium. KCNU1 channel auxiliary protein. Modulates KCNU1 gating properties. This chain is Leucine-rich repeat-containing protein 52 (LRRC52), found in Homo sapiens (Human).